Consider the following 230-residue polypeptide: Probable phosphatase IndB (230 aa).

The Nucleophile role is filled by Asp-8. Mg(2+) is bound by residues Asp-8, Asp-10, and Asp-169. The active-site Proton donor is Asp-10.

It belongs to the HAD-like hydrolase superfamily. Requires Mg(2+) as cofactor.

Functionally, part of an operon that could be involved in the biosynthesis of the blue pigment indigoidine, which is implicated in pathogenicity and protection from oxidative stress. This chain is Probable phosphatase IndB, found in Dickeya dadantii (strain 3937) (Erwinia chrysanthemi (strain 3937)).